The primary structure comprises 288 residues: Ankyrin repeat and SOCS box protein 8 (288 aa).

A Phosphoserine modification is found at serine 17. 4 ANK repeats span residues 52–81 (GTLKPLHCACMVSDADCVELLLEKGAEVNA), 85–113 (YNRTALHYAAEKDEACVEVLLEYGANPNA), 117–146 (NRDTPLHWAAFKNNAECVRALLESGASVNA), and 150–179 (NNDTPLSWAAMKGNLESVSILLDYGAEVRV). Positions 235-288 (QLCEKLTVLCSAPGTLKTLSRYAVRRSLGLQYLPDAVKGLPLPASLKEYLLLIE) constitute an SOCS box domain.

It belongs to the ankyrin SOCS box (ASB) family. Interacts with TBK1; this interaction promotes TBK1 proteasomal degradation. Phosphorylated by TBK1.

Its subcellular location is the cytoplasm. It participates in protein modification; protein ubiquitination. In terms of biological role, may be a substrate-recognition component of a SCF-like ECS (Elongin-Cullin-SOCS-box protein) E3 ubiquitin-protein ligase complex which mediates the ubiquitination and subsequent proteasomal degradation of target proteins. Inhibits IFN-beta production through the IRF3 signaling pathway by targeting TBK1 via 'Lys-48'-linked ubiquitination, leading to its proteasomal degradation. This Bos taurus (Bovine) protein is Ankyrin repeat and SOCS box protein 8 (ASB8).